A 512-amino-acid chain; its full sequence is Calcium-dependent protein kinase 18 (512 aa).

A disordered region spans residues 1 to 25; sequence MGLCSSSSARRDAGTPGGGNGAGNK. Gly-2 is lipidated: N-myristoyl glycine. Residues 52-312 enclose the Protein kinase domain; it reads YALGKLLGHG…AAQALSHEWV (261 aa). Residues 58–66 and Lys-81 each bind ATP; that span reads LGHGQFGYT. Catalysis depends on Asp-178, which acts as the Proton acceptor. The interval 318–348 is autoinhibitory domain; that stretch reads ASDIPLDISVLHNMRQFVKYSRFKQFALRAL. EF-hand domains lie at 355-390, 392-427, 434-469, and 472-499; these read EELS…DVPW, LKGP…VHQL, KWKS…KGSI, and LLEE…ASMS. Residues Asp-368, Asp-370, Asn-372, Thr-374, Glu-379, Asp-405, Asn-407, Asp-409, Glu-416, Asp-447, Asp-449, Asp-451, Tyr-453, Glu-458, Asp-477, Asp-479, Asp-481, Lys-483, and Glu-488 each contribute to the Ca(2+) site.

The protein belongs to the protein kinase superfamily. Ser/Thr protein kinase family. CDPK subfamily. In terms of assembly, interacts with MPK5. In terms of processing, autophosphorylated. Phosphorylated by MPK5.

The protein resides in the cell membrane. It catalyses the reaction L-seryl-[protein] + ATP = O-phospho-L-seryl-[protein] + ADP + H(+). It carries out the reaction L-threonyl-[protein] + ATP = O-phospho-L-threonyl-[protein] + ADP + H(+). Activated by calcium. Autophosphorylation may play an important role in the regulation of the kinase activity. Its function is as follows. May play a role in signal transduction pathways that involve calcium as a second messenger. Functions upstream of MPK5 in a signaling pathway that represses defense gene expression and negatively regulates resistance to rice blast fungus. Phosphorylates MPK5 at Thr-14 and Thr-32 and activates MPK5 independently of MAP kinase kinase (MKK) phosphorylation. May be involved in arbuscular mycorrhizal presymbiotic phase signaling. Phosphorylates the elicitor-responsive protein ERG1 in vitro. Phosphorylation is calcium-dependent. The sequence is that of Calcium-dependent protein kinase 18 from Oryza sativa subsp. japonica (Rice).